Reading from the N-terminus, the 184-residue chain is Probable RNA 2'-phosphotransferase (184 aa).

This sequence belongs to the KptA/TPT1 family.

Its function is as follows. Removes the 2'-phosphate from RNA via an intermediate in which the phosphate is ADP-ribosylated by NAD followed by a presumed transesterification to release the RNA and generate ADP-ribose 1''-2''-cyclic phosphate (APPR&gt;P). May function as an ADP-ribosylase. In Rhizobium leguminosarum bv. trifolii (strain WSM2304), this protein is Probable RNA 2'-phosphotransferase.